A 275-amino-acid polypeptide reads, in one-letter code: Phosphate import ATP-binding protein PstB 2 (275 aa).

The region spanning 29-270 (LEVKNLNIYY…PSEKKTEDYI (242 aa)) is the ABC transporter domain. ATP is bound at residue 61-68 (GPSGCGKS).

The protein belongs to the ABC transporter superfamily. Phosphate importer (TC 3.A.1.7) family. In terms of assembly, the complex is composed of two ATP-binding proteins (PstB), two transmembrane proteins (PstC and PstA) and a solute-binding protein (PstS).

The protein localises to the cell membrane. The catalysed reaction is phosphate(out) + ATP + H2O = ADP + 2 phosphate(in) + H(+). Its function is as follows. Part of the ABC transporter complex PstSACB involved in phosphate import. Responsible for energy coupling to the transport system. The polypeptide is Phosphate import ATP-binding protein PstB 2 (Bacillus licheniformis (strain ATCC 14580 / DSM 13 / JCM 2505 / CCUG 7422 / NBRC 12200 / NCIMB 9375 / NCTC 10341 / NRRL NRS-1264 / Gibson 46)).